A 1259-amino-acid polypeptide reads, in one-letter code: uncharacterized protein (1259 aa).

Residues 354–410 (KLNQAGGKRNSSMNNSTQNNNSSRSNNSARNNNSVWNNNNSAWKNNNSAWNDNSSWK) are disordered. Low complexity predominate over residues 362–410 (RNSSMNNSTQNNNSSRSNNSARNNNSVWNNNNSAWKNNNSAWNDNSSWK).

Its subcellular location is the virion. This is an uncharacterized protein from Acanthamoeba polyphaga (Amoeba).